A 1249-amino-acid chain; its full sequence is Myosin-1 (1249 aa).

The segment at 1–40 (MGHSRRPAGGEKKSRFGRSKAAADVGDGRQAGGKPQVRKA) is disordered. The Myosin motor domain maps to 50 to 729 (IGVSDLTLLS…TLFALEAMRD (680 aa)). Residue 143–150 (GESGAGKT) coordinates ATP. Position 371 is a phosphoserine (serine 371). The tract at residues 418 to 500 (SIGILDIYGF…PGVFAALNDA (83 aa)) is actin-binding. IQ domains lie at 733–753 (HNMAIRIQRAWRNYLRYRTEC) and 754–779 (AIRIQRFWRRMNGGLELLKLRDQGHT). Residues 787–979 (RRRMSILGSR…PGEPPNSVSK (193 aa)) form the TH1 domain. Disordered regions lie at residues 959–1081 (DSYK…KAKA) and 1127–1249 (EAYL…DDDW). Low complexity-rich tracts occupy residues 1026 to 1035 (PQTAAAQPTP) and 1043 to 1061 (PVAAVAASHSRTSSTASAR). Residues 1062–1073 (APPPPPPAPPAA) show a composition bias toward pro residues. The region spanning 1074–1135 (AGPKKAKALY…PEAYLEEQVA (62 aa)) is the SH3 domain. Pro residues predominate over residues 1137 to 1149 (TPKPAPPPPPPVA). Residues 1150-1170 (PRASPAPVNGSAAVAAAKAKA) are compositionally biased toward low complexity. The segment covering 1199 to 1221 (VSMNSQGDSSGASGRGTPSSVSN) has biased composition (polar residues). Residues 1222 to 1235 (ASLAGGLAEALRAR) are compositionally biased toward low complexity.

This sequence belongs to the TRAFAC class myosin-kinesin ATPase superfamily. Myosin family. Interacts (via IQ domains) with camA. Post-translationally, phosphorylation of the TEDS site (Ser-371) is required for the polarization of the actin cytoskeleton. Phosphorylation probably activates the myosin-I ATPase activity.

It localises to the cytoplasm. It is found in the cytoskeleton. The protein localises to the actin patch. In terms of biological role, type-I myosin implicated in the organization of the actin cytoskeleton. Required for proper actin cytoskeleton polarization. At the cell cortex, assembles in patch-like structures together with proteins from the actin-polymerizing machinery and promotes actin assembly. Functions as actin nucleation-promoting factor (NPF) for the Arp2/3 complex. Plays an important role in polarized growth, spore germination, hyphal morphogenesis, and septal wall formation. The chain is Myosin-1 (myoA) from Emericella nidulans (strain FGSC A4 / ATCC 38163 / CBS 112.46 / NRRL 194 / M139) (Aspergillus nidulans).